The chain runs to 258 residues: Tetraspanin-15 (258 aa).

At 1–20 (MGALGDSAYGARGRLIKFSY) the chain is on the cytoplasmic side. The helical transmembrane segment at 21–41 (IVTALISILFSISCICYGIWL) threads the bilayer. Residues 42–62 (LARRSQYAELVSPSLYVDVGR) are Extracellular-facing. The helical transmembrane segment at 63-83 (ILVIISILSILNYLICFYAIF) threads the bilayer. Over 84-93 (KEMRCFVTSC) the chain is Cytoplasmic. The chain crosses the membrane as a helical span at residues 94–114 (AVASIVIAVMLIIGGCIGLNF). At 115-223 (RDQLTHYTPL…STCYEPLQND (109 aa)) the chain is on the extracellular side. A helical membrane pass occupies residues 224-244 (LLHVMNVASWLCITNAIVQII). Residues 245-258 (PSVAGCWYSKLIRK) lie on the Cytoplasmic side of the membrane.

Belongs to the tetraspanin (TM4SF) family. Interacts with doxa-1 and bli-3. As to expression, expressed in the body wall (hyp7 hypodermal syncitium), pharynx and vulva. Expressed in a punctate pattern along the thick region of the hypodermis.

It is found in the membrane. In terms of biological role, plays a role in cuticle biogenesis. In complex with doxa-1 and the dual oxidase bli-3, promotes the generation of reactive oxygen species (ROS) and tyrosine cross-linking of collagen, thus stabilizing cuticular extracellular matrix. This Caenorhabditis elegans protein is Tetraspanin-15.